A 75-amino-acid polypeptide reads, in one-letter code: Guanine nucleotide-binding protein G(I)/G(S)/G(O) subunit gamma-4 (75 aa).

Residue cysteine 72 is modified to Cysteine methyl ester. Cysteine 72 carries the S-geranylgeranyl cysteine lipid modification. Positions threonine 73–leucine 75 are cleaved as a propeptide — removed in mature form.

The protein belongs to the G protein gamma family. As to quaternary structure, g proteins are composed of 3 units, alpha, beta and gamma. Interacts with beta-1 and beta-2, but not with beta-3. Interacts with KCNK1. Interacts (via C-terminus) with KCNK2/TREK-1 (via N-terminus); this interaction confers ion selectivity to Cl(-) and L-glutamate. As to expression, brain, kidney, pancreas, skeletal muscle and faintly in cardiac muscle.

Its subcellular location is the cell membrane. In terms of biological role, guanine nucleotide-binding proteins (G proteins) are involved as a modulator or transducer in various transmembrane signaling systems. The beta and gamma chains are required for the GTPase activity, for replacement of GDP by GTP, and for G protein-effector interaction. The polypeptide is Guanine nucleotide-binding protein G(I)/G(S)/G(O) subunit gamma-4 (GNG4) (Homo sapiens (Human)).